A 129-amino-acid polypeptide reads, in one-letter code: Phosphoribosyl-AMP cyclohydrolase (129 aa).

Asp-76 is a binding site for Mg(2+). Residue Cys-77 participates in Zn(2+) binding. Mg(2+) contacts are provided by Asp-78 and Asp-80. Zn(2+) is bound by residues Cys-97 and Cys-104.

It belongs to the PRA-CH family. As to quaternary structure, homodimer. It depends on Mg(2+) as a cofactor. Zn(2+) is required as a cofactor.

It is found in the cytoplasm. The enzyme catalyses 1-(5-phospho-beta-D-ribosyl)-5'-AMP + H2O = 1-(5-phospho-beta-D-ribosyl)-5-[(5-phospho-beta-D-ribosylamino)methylideneamino]imidazole-4-carboxamide. The protein operates within amino-acid biosynthesis; L-histidine biosynthesis; L-histidine from 5-phospho-alpha-D-ribose 1-diphosphate: step 3/9. Catalyzes the hydrolysis of the adenine ring of phosphoribosyl-AMP. The chain is Phosphoribosyl-AMP cyclohydrolase from Albidiferax ferrireducens (strain ATCC BAA-621 / DSM 15236 / T118) (Rhodoferax ferrireducens).